A 941-amino-acid chain; its full sequence is MVIIGPRGPGSQRLLLSLLLLAAWEVGSGQLHYSVYEEAKHGTFVGRIAQDLGLELAELVPRLFRVASKRHGDLLEVNLQNGILFVNSRIDREKLCGRSAECSIHLEVIVDRPLQVFHVDVEVKDINDNPPVFREREQKVPVSESAPLDSHFPLEGASDADIGVNSLLTYALSLNENFELKIKTKKDKSILPELVLRKLLDREQTPKLNLLLMVIDGGKPELTGSVQIQITVLDVNDNGPAFDKPSYKVVLSENVQNDTRVIQLNASDPDEGLNGEISYGIKMILPVSEKCMFSINPDTGEIRIYGELDFEENNAYEIQVNAIDKGIPSMAGHSMVLVEVLDVNDNVPEVMVTSLSLPVQEDAQVGTVIALISVSDRDSGANGQVICSLTPHVPFKLVSTYKNYYSLVLDSALDRESVSAYELVVTARDGGSPSLWATARVSVEVADVNDNAPAFAQPEYTVFVKENNPPGCHIFTVSAWDADAQKNALVSYSLVERRVGEHALSSYVSVHAESGKVYALQPLDHEELELLQFQVSARDAGVPPLGSNVTLQVFVLDENDNAPALLATPAGSAGGAVSELVPRSVGAGHVVAKVRAVDADSGYNAWLSYELQPAAVGAHIPFHVGLYTGEISTTRILDEADAPRHRLLVLVKDHGEPALTSTATVLVSLVENGQAPKTSSRASVGAVDPEAALVDINVYLIIAICAVSSLLVLTLLLYTALRCSAPPTVSRCAPGKPTLVCSSAVGSWSYSQQRRQRVCSAESPPKTDLMAFSPSLQLSREDCLNPPSEPRQPNPDWRYSASLRAGMHSSVHLEEAGILRAGPGGPDQQWPTVSSATPEPEAGEVSPPVGAGVNSNSWTFKYGPGNPKQSGPGELPDKFIIPGSPAIISIRQEPTNSQIDKSDFITFGKKEETKKKKKKKKGNKTQEKKEKGNSTTDNSDQ.

The first 29 residues, 1 to 29 (MVIIGPRGPGSQRLLLSLLLLAAWEVGSG), serve as a signal peptide directing secretion. Cadherin domains are found at residues 30-133 (QLHY…PPVF), 134-242 (RERE…GPAF), 243-350 (DKPS…VPEV), 351-455 (MVTS…APAF), 456-565 (AQPE…APAL), and 581-678 (VPRS…APKT). The Extracellular segment spans residues 30–697 (QLHYSVYEEA…DPEAALVDIN (668 aa)). N-linked (GlcNAc...) asparagine glycosylation is found at asparagine 257 and asparagine 265. A glycan (N-linked (GlcNAc...) asparagine) is linked at asparagine 548. The chain crosses the membrane as a helical span at residues 698–718 (VYLIIAICAVSSLLVLTLLLY). Residues 719-941 (TALRCSAPPT…GNSTTDNSDQ (223 aa)) lie on the Cytoplasmic side of the membrane. PXXP repeat units follow at residues 734 to 737 (PGKP), 790 to 793 (PRQP), 823 to 826 (PGGP), 863 to 866 (GPGN), and 882 to 885 (PGSP). Residues 734 to 885 (PGKPTLVCSS…PDKFIIPGSP (152 aa)) form a 5 X 4 AA repeats of P-X-X-P region. The segment at 818 to 941 (ILRAGPGGPD…GNSTTDNSDQ (124 aa)) is disordered. Residues 900–914 (DKSDFITFGKKEETK) show a composition bias toward basic and acidic residues.

The protein resides in the cell membrane. Potential calcium-dependent cell-adhesion protein. May be involved in the establishment and maintenance of specific neuronal connections in the brain. This is Protocadherin alpha-12 (PCDHA12) from Homo sapiens (Human).